The chain runs to 401 residues: Calcium-responsive transcription coactivator (401 aa).

Positions 1 to 148 (MSVAFASARP…TLPTTSMSMS (148 aa)) are N-terminal auto-inhibitory domain; necessary for interaction with SMARCA4/BRG1. Positions 50–53 (YQQI) match the SH2-binding motif. 2 disordered regions span residues 72–171 (QSLL…VPMQ) and 214–401 (TRAR…NYQQ). Positions 85-106 (LGPGALSQSGSSQGLHPQGSLS) are enriched in low complexity. Residues 128-137 (NHVSMQQTAQ) show a composition bias toward polar residues. The segment covering 138-149 (STLPTTSMSMSG) has biased composition (low complexity). Positions 149 to 237 (GSGHGTGPGY…GGSMMGQRPM (89 aa)) are methionine-rich intra-molecular domain. Residues 251–322 (YLGQEEYYSE…SQYSQQQAGY (72 aa)) form an MFD domain region. 2 stretches are compositionally biased toward polar residues: residues 260 to 276 (EQYSHSQGSAEPMSQQY) and 285 to 294 (AYQQSSYTEQ). The span at 295-304 (SYDRSFEDPT) shows a compositional bias: basic and acidic residues. Positions 310 to 374 (GGNSQYSQQQ…QGQGQQYGSY (65 aa)) are enriched in low complexity. Residues 339-401 (NQQSYPGQQQ…EQGQYGNYQQ (63 aa)) are necessary for nuclear localization. The SH2-binding signature appears at 358–361 (SQYS). Polar residues predominate over residues 375-387 (RTSQTGPSAQQQR). The SH3-binding motif lies at 376–384 (TSQTGPSAQ). Residues 389–401 (YGYEQGQYGNYQQ) are compositionally biased toward low complexity. Residues 392 to 401 (EQGQYGNYQQ) are necessary for interaction with CREBBP and for the recruitment of CREBBP to the nuclear bodies. Positions 396–399 (YGNY) match the SH2-binding motif.

This sequence belongs to the SS18 family. As to quaternary structure, homodimer. Dimerization may be necessary for its function in neuronal dendritic development. Interacts (via C-terminus) with CREBBP (via N-terminus), EP300 and SMARCA4/BRG1. Interacts with the nBAF complex. Association with CREBBP facilitates transcription while the association with SMARCA4/BRG1 suppresses CREST-mediated transcription in resting neurons. Brain (at protein level). Also found in the heart, liver, kidney and testis.

Its subcellular location is the nucleus. The protein resides in the chromosome. It localises to the centromere. The protein localises to the kinetochore. Transcriptional activator which is required for calcium-dependent dendritic growth and branching in cortical neurons. Recruits CREB-binding protein (CREBBP) to nuclear bodies. Component of the CREST-BRG1 complex, a multiprotein complex that regulates promoter activation by orchestrating a calcium-dependent release of a repressor complex and a recruitment of an activator complex. In resting neurons, transcription of the c-FOS promoter is inhibited by BRG1-dependent recruitment of a phospho-RB1-HDAC1 repressor complex. Upon calcium influx, RB1 is dephosphorylated by calcineurin, which leads to release of the repressor complex. At the same time, there is increased recruitment of CREBBP to the promoter by a CREST-dependent mechanism, which leads to transcriptional activation. The CREST-BRG1 complex also binds to the NR2B promoter, and activity-dependent induction of NR2B expression involves a release of HDAC1 and recruitment of CREBBP. This Rattus norvegicus (Rat) protein is Calcium-responsive transcription coactivator (Ss18l1).